Consider the following 130-residue polypeptide: Small ribosomal subunit protein uS9 (130 aa).

Positions 109 to 130 (RMKERKKYGLKKARRAPQFSKR) are disordered. The segment covering 111-130 (KERKKYGLKKARRAPQFSKR) has biased composition (basic residues).

It belongs to the universal ribosomal protein uS9 family.

This Clostridium kluyveri (strain NBRC 12016) protein is Small ribosomal subunit protein uS9.